The following is a 253-amino-acid chain: uncharacterized protein (253 aa).

NADP(+) is bound at residue 10 to 35; sequence ISGAASKRGIGRATAELFASHGARVA. S144 contacts substrate. Catalysis depends on Y159, which acts as the Proton acceptor.

Belongs to the short-chain dehydrogenases/reductases (SDR) family.

This is an uncharacterized protein from Sinorhizobium fredii (strain NBRC 101917 / NGR234).